The primary structure comprises 102 residues: Small ribosomal subunit protein uS10 (102 aa).

This sequence belongs to the universal ribosomal protein uS10 family. In terms of assembly, part of the 30S ribosomal subunit.

In terms of biological role, involved in the binding of tRNA to the ribosomes. This chain is Small ribosomal subunit protein uS10, found in Methanococcus maripaludis (strain C6 / ATCC BAA-1332).